Reading from the N-terminus, the 156-residue chain is Cytochrome c-type biogenesis protein CcmE 1 (156 aa).

The Cytoplasmic portion of the chain corresponds to 1–8; the sequence is MNATRRQR. A helical; Signal-anchor for type II membrane protein transmembrane segment spans residues 9–29; sequence LWWVICVLTAAALAVTLIVFA. Over 30 to 156 the chain is Periplasmic; the sequence is LQRNMSYLFT…ATATPLTAPR (127 aa). His123 and Tyr127 together coordinate heme. The tract at residues 137–156 is disordered; that stretch reads AEGHAGKPIPATATPLTAPR. Over residues 146–156 the composition is skewed to low complexity; sequence PATATPLTAPR.

This sequence belongs to the CcmE/CycJ family.

The protein resides in the cell inner membrane. In terms of biological role, heme chaperone required for the biogenesis of c-type cytochromes. Transiently binds heme delivered by CcmC and transfers the heme to apo-cytochromes in a process facilitated by CcmF and CcmH. The sequence is that of Cytochrome c-type biogenesis protein CcmE 1 from Xanthomonas euvesicatoria pv. vesicatoria (strain 85-10) (Xanthomonas campestris pv. vesicatoria).